The sequence spans 164 residues: NADH-quinone oxidoreductase subunit B (164 aa).

[4Fe-4S] cluster contacts are provided by C38, C39, C104, and C133.

It belongs to the complex I 20 kDa subunit family. As to quaternary structure, NDH-1 is composed of 14 different subunits. Subunits NuoB, C, D, E, F, and G constitute the peripheral sector of the complex. [4Fe-4S] cluster is required as a cofactor.

It is found in the cell inner membrane. It catalyses the reaction a quinone + NADH + 5 H(+)(in) = a quinol + NAD(+) + 4 H(+)(out). Its function is as follows. NDH-1 shuttles electrons from NADH, via FMN and iron-sulfur (Fe-S) centers, to quinones in the respiratory chain. The immediate electron acceptor for the enzyme in this species is believed to be ubiquinone. Couples the redox reaction to proton translocation (for every two electrons transferred, four hydrogen ions are translocated across the cytoplasmic membrane), and thus conserves the redox energy in a proton gradient. The chain is NADH-quinone oxidoreductase subunit B from Protochlamydia amoebophila (strain UWE25).